The following is a 95-amino-acid chain: Aspartyl/glutamyl-tRNA(Asn/Gln) amidotransferase subunit C (95 aa).

Belongs to the GatC family. Heterotrimer of A, B and C subunits.

The enzyme catalyses L-glutamyl-tRNA(Gln) + L-glutamine + ATP + H2O = L-glutaminyl-tRNA(Gln) + L-glutamate + ADP + phosphate + H(+). It carries out the reaction L-aspartyl-tRNA(Asn) + L-glutamine + ATP + H2O = L-asparaginyl-tRNA(Asn) + L-glutamate + ADP + phosphate + 2 H(+). Allows the formation of correctly charged Asn-tRNA(Asn) or Gln-tRNA(Gln) through the transamidation of misacylated Asp-tRNA(Asn) or Glu-tRNA(Gln) in organisms which lack either or both of asparaginyl-tRNA or glutaminyl-tRNA synthetases. The reaction takes place in the presence of glutamine and ATP through an activated phospho-Asp-tRNA(Asn) or phospho-Glu-tRNA(Gln). This is Aspartyl/glutamyl-tRNA(Asn/Gln) amidotransferase subunit C from Beijerinckia indica subsp. indica (strain ATCC 9039 / DSM 1715 / NCIMB 8712).